A 262-amino-acid chain; its full sequence is Caffeyl-CoA reductase-Etf complex subunit CarD (262 aa).

This sequence belongs to the ETF beta-subunit/FixA family. As to quaternary structure, part of the homotrimeric caffeyl-CoA reductase-Etf complex composed of (R)-2-hydroxyisocaproyl-CoA dehydratase CarC, and the electron transfer flavoprotein (ETF) alpha (CarE) and beta (CarD) subunits. FAD is required as a cofactor. The cofactor is AMP.

It localises to the cytoplasm. It catalyses the reaction hydrocaffeoyl-CoA + 2 reduced [2Fe-2S]-[ferredoxin] + 2 NAD(+) = (E)-caffeoyl-CoA + 2 oxidized [2Fe-2S]-[ferredoxin] + 2 NADH. Functionally, caffeyl-CoA reductase-Etf complex catalyzes the reduction of caffeyl-CoA to yield hydrocaffeyl-CoA. It couples the endergonic ferredoxin reduction with NADH as reductant to the exergonic reduction of caffeoyl-CoA with the same reductant. It uses the mechanism of electron bifurcation to overcome the steep energy barrier in ferredoxin reduction. The electron transfer flavoprotein (Etf) mediates the electron transfer between the different donors and acceptors. The complex can also reduce 4-coumaroyl-CoA and feruloyl-CoA. The chain is Caffeyl-CoA reductase-Etf complex subunit CarD from Acetobacterium woodii (strain ATCC 29683 / DSM 1030 / JCM 2381 / KCTC 1655 / WB1).